We begin with the raw amino-acid sequence, 293 residues long: Phycoerythrin class 2 subunit gamma, linker polypeptide (293 aa).

Cysteine 49 is a phycourobilin binding site. In terms of domain architecture, PBS-linker spans 50–229 (AAMGIGIGPR…LGGMKVAISD (180 aa)).

Post-translationally, contains one covalently linked phycourobilin chromophore.

It is found in the cellular thylakoid membrane. Functionally, this protein is a bile pigment-bearing rod linker polypeptide that associates with C-phycoerythrin. The protein is Phycoerythrin class 2 subunit gamma, linker polypeptide (mpeC) of Synechococcus sp. (strain WH8020).